Reading from the N-terminus, the 318-residue chain is Sensor histidine kinase NatK (318 aa).

A run of 3 helical transmembrane segments spans residues 4 to 24 (LFQC…AAAF), 27 to 47 (STAA…LYIW), and 72 to 82 (VGVVLIGTDIM). The region spanning 132–318 (RNHDTMKHIT…RLEIKIPFQK (187 aa)) is the Histidine kinase domain. At His134 the chain carries Phosphohistidine; by autocatalysis.

The protein localises to the cell membrane. The enzyme catalyses ATP + protein L-histidine = ADP + protein N-phospho-L-histidine.. In terms of biological role, member of the two-component regulatory system NatK/NatR that positively regulates the expression of the natAB operon. Potentially phosphorylates NatR. This is Sensor histidine kinase NatK from Bacillus subtilis (strain 168).